We begin with the raw amino-acid sequence, 385 residues long: Aspartate carbamoyltransferase 2, chloroplastic (385 aa).

The N-terminal 30 residues, 1–30 (MTASSSLFSCSMHMEVLTPKISKWPKNFVS), are a transit peptide targeting the chloroplast. The carbamoyl phosphate site is built by R131 and T132. Positions 131 and 132 each coordinate UMP. Residue K161 coordinates L-aspartate. Carbamoyl phosphate is bound by residues R182, H210, and Q213. Positions 182 and 210 each coordinate UMP. UMP contacts are provided by R243 and R305. The L-aspartate site is built by R243 and R305. Carbamoyl phosphate is bound by residues L345 and P346.

Belongs to the aspartate/ornithine carbamoyltransferase superfamily. ATCase family. In terms of assembly, homotrimer.

It localises to the plastid. The protein resides in the chloroplast. The enzyme catalyses carbamoyl phosphate + L-aspartate = N-carbamoyl-L-aspartate + phosphate + H(+). The protein operates within pyrimidine metabolism; UMP biosynthesis via de novo pathway; (S)-dihydroorotate from bicarbonate: step 2/3. Its activity is regulated as follows. Feedback inhibited by UMP. Its function is as follows. Catalyzes the condensation of carbamoyl phosphate and aspartate to form carbamoyl aspartate and inorganic phosphate, the committed step in the de novo pyrimidine nucleotide biosynthesis pathway. In Pisum sativum (Garden pea), this protein is Aspartate carbamoyltransferase 2, chloroplastic (PYRB2).